A 415-amino-acid polypeptide reads, in one-letter code: Neuromedin-U receptor 2 (415 aa).

Over 1-49 (MSGMEKLQNASWIYQQKLEDPFQKHLNSTEEYLAFLCGPRRSHFFLPVS) the chain is Extracellular. Asparagine 9 and asparagine 27 each carry an N-linked (GlcNAc...) asparagine glycan. Residues 50–70 (VVYVPIFVVGVIGNVLVCLVI) traverse the membrane as a helical segment. At 71–82 (LQHQAMKTPTNY) the chain is on the cytoplasmic side. The chain crosses the membrane as a helical span at residues 83–103 (YLFSLAVSDLLVLLLGMPLEV). The Extracellular portion of the chain corresponds to 104–123 (YEMWRNYPFLFGPVGCYFKT). Residues cysteine 119 and cysteine 204 are joined by a disulfide bond. A helical membrane pass occupies residues 124–146 (ALFETVCFASILSITTVSVERYV). Residues 147–165 (AILHPFRAKLQSTRRRALR) are Cytoplasmic-facing. A helical membrane pass occupies residues 166–186 (ILGIVWGFSVLFSLPNTSIHG). At 187 to 214 (IKFHYFPNGSLVPGSATCTVIKPMWIYN) the chain is on the extracellular side. The N-linked (GlcNAc...) asparagine glycan is linked to asparagine 194. A helical membrane pass occupies residues 215–235 (FIIQVTSFLFYLLPMTVISVL). The Cytoplasmic segment spans residues 236-265 (YYLMALRLKKDKSLEADEGNANIQRPCRKS). Residues 266-286 (VNKMLFVLVLVFAICWAPFHI) traverse the membrane as a helical segment. The Extracellular segment spans residues 287 to 301 (DRLFFSFVEEWSESL). Residues 302–322 (AAVFNLVHVVSGVFFYLSSAV) traverse the membrane as a helical segment. Topologically, residues 323 to 415 (NPIIYNLLSR…NYQSFHFNKT (93 aa)) are cytoplasmic.

It belongs to the G-protein coupled receptor 1 family. As to expression, predominantly expressed in the CNS, particularly in the medulla oblongata, pontine reticular formation, spinal cord, and thalamus. High level in testis whereas lower levels are present in a variety of peripheral tissues including the gastrointestinal tract, genitourinary tract, liver, pancreas, adrenal gland, thyroid gland, lung, trachea, spleen and thymus.

Its subcellular location is the cell membrane. Receptor for the neuromedin-U and neuromedin-S neuropeptides. The polypeptide is Neuromedin-U receptor 2 (NMUR2) (Homo sapiens (Human)).